Consider the following 245-residue polypeptide: 1-(5-phosphoribosyl)-5-[(5-phosphoribosylamino)methylideneamino] imidazole-4-carboxamide isomerase (245 aa).

Asp-7 functions as the Proton acceptor in the catalytic mechanism. Asp-129 serves as the catalytic Proton donor.

It belongs to the HisA/HisF family.

The protein resides in the cytoplasm. The catalysed reaction is 1-(5-phospho-beta-D-ribosyl)-5-[(5-phospho-beta-D-ribosylamino)methylideneamino]imidazole-4-carboxamide = 5-[(5-phospho-1-deoxy-D-ribulos-1-ylimino)methylamino]-1-(5-phospho-beta-D-ribosyl)imidazole-4-carboxamide. It participates in amino-acid biosynthesis; L-histidine biosynthesis; L-histidine from 5-phospho-alpha-D-ribose 1-diphosphate: step 4/9. This is 1-(5-phosphoribosyl)-5-[(5-phosphoribosylamino)methylideneamino] imidazole-4-carboxamide isomerase from Salmonella arizonae (strain ATCC BAA-731 / CDC346-86 / RSK2980).